The following is a 290-amino-acid chain: Light-independent protochlorophyllide reductase iron-sulfur ATP-binding protein (290 aa).

ATP contacts are provided by residues 10–15 (GIGKST) and K39. S14 is a binding site for Mg(2+). The [4Fe-4S] cluster site is built by C95 and C129. 180 to 181 (NR) is a binding site for ATP.

This sequence belongs to the NifH/BchL/ChlL family. In terms of assembly, homodimer. Protochlorophyllide reductase is composed of three subunits; ChlL, ChlN and ChlB. It depends on [4Fe-4S] cluster as a cofactor.

It localises to the plastid. The protein resides in the chloroplast. It catalyses the reaction chlorophyllide a + oxidized 2[4Fe-4S]-[ferredoxin] + 2 ADP + 2 phosphate = protochlorophyllide a + reduced 2[4Fe-4S]-[ferredoxin] + 2 ATP + 2 H2O. The protein operates within porphyrin-containing compound metabolism; chlorophyll biosynthesis (light-independent). In terms of biological role, component of the dark-operative protochlorophyllide reductase (DPOR) that uses Mg-ATP and reduced ferredoxin to reduce ring D of protochlorophyllide (Pchlide) to form chlorophyllide a (Chlide). This reaction is light-independent. The L component serves as a unique electron donor to the NB-component of the complex, and binds Mg-ATP. This is Light-independent protochlorophyllide reductase iron-sulfur ATP-binding protein from Cycas taitungensis (Prince sago).